The chain runs to 357 residues: Membrane-bound lytic murein transglycosylase C (357 aa).

A signal peptide spans 1–15 (MKKYLLLALLPFLYA). Cys-16 carries the N-palmitoyl cysteine lipid modification. Cys-16 carries S-diacylglycerol cysteine lipidation.

The protein belongs to the transglycosylase Slt family.

Its subcellular location is the cell outer membrane. The enzyme catalyses Exolytic cleavage of the (1-&gt;4)-beta-glycosidic linkage between N-acetylmuramic acid (MurNAc) and N-acetylglucosamine (GlcNAc) residues in peptidoglycan, from either the reducing or the non-reducing ends of the peptidoglycan chains, with concomitant formation of a 1,6-anhydrobond in the MurNAc residue.. Functionally, murein-degrading enzyme. May play a role in recycling of muropeptides during cell elongation and/or cell division. The chain is Membrane-bound lytic murein transglycosylase C from Haemophilus influenzae (strain ATCC 51907 / DSM 11121 / KW20 / Rd).